We begin with the raw amino-acid sequence, 52 residues long: Large ribosomal subunit protein bL33 (52 aa).

It belongs to the bacterial ribosomal protein bL33 family.

In Chlamydia abortus (strain DSM 27085 / S26/3) (Chlamydophila abortus), this protein is Large ribosomal subunit protein bL33.